The sequence spans 330 residues: T-cell leukemia homeobox protein 1 (330 aa).

The tract at residues 186–207 (DRFTGHPYQNRTPPKKKKPRTS) is disordered. The homeobox DNA-binding region spans 201 to 260 (KKKPRTSFTRLQICELEKRFHRQKYLASAERAALAKALKMTDAQVKTWFQNRRTKWRRQT). Lys236 is modified (N6-acetyllysine).

In terms of assembly, interacts with MEIS1, MEIS2, PBX1, PBX2 and PBX3.

It localises to the nucleus. Controls the genesis of the spleen. Binds to the DNA sequence 5'-GGCGGTAAGTGG-3'. The protein is T-cell leukemia homeobox protein 1 (TLX1) of Homo sapiens (Human).